A 245-amino-acid polypeptide reads, in one-letter code: 2,3-bisphosphoglycerate-dependent phosphoglycerate mutase (245 aa).

Substrate contacts are provided by residues 8–15 (RHGQSLWN), 21–22 (TG), Arg-60, 87–90 (ERHY), Lys-98, 114–115 (RR), and 183–184 (GN). His-9 functions as the Tele-phosphohistidine intermediate in the catalytic mechanism. Glu-87 acts as the Proton donor/acceptor in catalysis.

Belongs to the phosphoglycerate mutase family. BPG-dependent PGAM subfamily.

It carries out the reaction (2R)-2-phosphoglycerate = (2R)-3-phosphoglycerate. It functions in the pathway carbohydrate degradation; glycolysis; pyruvate from D-glyceraldehyde 3-phosphate: step 3/5. Catalyzes the interconversion of 2-phosphoglycerate and 3-phosphoglycerate. This Bacillus cereus (strain B4264) protein is 2,3-bisphosphoglycerate-dependent phosphoglycerate mutase.